A 546-amino-acid chain; its full sequence is Histidine--tRNA ligase, mitochondrial (546 aa).

The transit peptide at 1-20 (MLSRSLNKVVTSIKSSSIIR) directs the protein to the mitochondrion. Residues 129-131 (DLT), Arg156, Gln172, Asp176, Arg326, and 330-331 (YY) contribute to the L-histidine site.

This sequence belongs to the class-II aminoacyl-tRNA synthetase family.

It localises to the cytoplasm. The protein resides in the mitochondrion. The enzyme catalyses tRNA(His) + L-histidine + ATP = L-histidyl-tRNA(His) + AMP + diphosphate + H(+). Functionally, catalyzes the aminoacylation of histidyl-tRNA in both the cytoplasm and the mitochondrion. This is Histidine--tRNA ligase, mitochondrial (HTS1) from Saccharomyces cerevisiae (strain ATCC 204508 / S288c) (Baker's yeast).